A 212-amino-acid polypeptide reads, in one-letter code: Translation initiation factor IF-3 (212 aa).

Basic and acidic residues predominate over residues Leu-190–Ser-203. The tract at residues Leu-190 to Gln-212 is disordered.

This sequence belongs to the IF-3 family. In terms of assembly, monomer.

It is found in the cytoplasm. IF-3 binds to the 30S ribosomal subunit and shifts the equilibrium between 70S ribosomes and their 50S and 30S subunits in favor of the free subunits, thus enhancing the availability of 30S subunits on which protein synthesis initiation begins. In Mycoplasmopsis fermentans (Mycoplasma fermentans), this protein is Translation initiation factor IF-3.